Here is a 706-residue protein sequence, read N- to C-terminus: Serotransferrin (706 aa).

The first 19 residues, 1-19 (MRLAIRALLACAVLGLCLA), serve as a signal peptide directing secretion. 2 consecutive Transferrin-like domains span residues 23–349 (VRWC…NLRE) and 363–691 (VKWC…NLRQ). 2 disulfides stabilise this stretch: C26/C64 and C36/C55. Position 40 is a dimethylated arginine (R40). 2 residues coordinate Fe(3+): D79 and Y111. Disulfide bonds link C134–C215, C174–C190, C177–C198, C187–C200, and C248–C262. Hydrogencarbonate contacts are provided by T136, R140, A142, and G143. Position 209 (Y209) interacts with Fe(3+). H270 contributes to the Fe(3+) binding site. 11 cysteine pairs are disulfide-bonded: C360/C623, C366/C398, C376/C389, C423/C701, C441/C664, C474/C550, C498/C692, C508/C522, C519/C533, C590/C604, and C642/C647. Residue S391 is modified to Phosphoserine. Fe(3+) is bound by residues D413 and Y449. Hydrogencarbonate is bound by residues T476, R480, A482, and G483. N-linked (GlcNAc...) asparagine glycosylation is present at N515. Y544 contributes to the Fe(3+) binding site. H612 is a binding site for Fe(3+). S693 carries the post-translational modification Phosphoserine.

Belongs to the transferrin family. Monomer. Part of a complex composed of SLC40A1/ferroportin, TF/transferrin and HEPH/hephaestin that transfers iron from cells to transferrin. In terms of tissue distribution, expressed by the liver and secreted in plasma.

It localises to the secreted. Transferrins are iron binding transport proteins which can bind two Fe(3+) ions in association with the binding of an anion, usually bicarbonate. It is responsible for the transport of iron from sites of absorption and heme degradation to those of storage and utilization. Serum transferrin may also have a further role in stimulating cell proliferation. This chain is Serotransferrin (TF), found in Equus caballus (Horse).